Here is a 304-residue protein sequence, read N- to C-terminus: Acetyl-coenzyme A carboxylase carboxyl transferase subunit beta (304 aa).

The region spanning 29 to 298 is the CoA carboxyltransferase N-terminal domain; it reads LWTKCVSCAA…QAYRPSPQAS (270 aa). Residues Cys33, Cys36, Cys52, and Cys55 each coordinate Zn(2+). The C4-type zinc-finger motif lies at 33-55; it reads CVSCAALHYTKDFQLNLCVCPAC.

The protein belongs to the AccD/PCCB family. In terms of assembly, acetyl-CoA carboxylase is a heterohexamer composed of biotin carboxyl carrier protein (AccB), biotin carboxylase (AccC) and two subunits each of ACCase subunit alpha (AccA) and ACCase subunit beta (AccD). It depends on Zn(2+) as a cofactor.

It is found in the cytoplasm. It carries out the reaction N(6)-carboxybiotinyl-L-lysyl-[protein] + acetyl-CoA = N(6)-biotinyl-L-lysyl-[protein] + malonyl-CoA. The protein operates within lipid metabolism; malonyl-CoA biosynthesis; malonyl-CoA from acetyl-CoA: step 1/1. Its function is as follows. Component of the acetyl coenzyme A carboxylase (ACC) complex. Biotin carboxylase (BC) catalyzes the carboxylation of biotin on its carrier protein (BCCP) and then the CO(2) group is transferred by the transcarboxylase to acetyl-CoA to form malonyl-CoA. The protein is Acetyl-coenzyme A carboxylase carboxyl transferase subunit beta of Gloeobacter violaceus (strain ATCC 29082 / PCC 7421).